We begin with the raw amino-acid sequence, 506 residues long: Galactose/methyl galactoside import ATP-binding protein MglA (506 aa).

2 ABC transporter domains span residues 14-249 (LEMS…VGRS) and 264-506 (VILE…SLHL). An ATP-binding site is contributed by 46–53 (GENGAGKS).

It belongs to the ABC transporter superfamily. Galactose/methyl galactoside importer (TC 3.A.1.2.3) family. In terms of assembly, the complex is composed of one ATP-binding protein (MglA), two transmembrane proteins (MglC) and a solute-binding protein (MglB).

It localises to the cell inner membrane. The enzyme catalyses D-galactose(out) + ATP + H2O = D-galactose(in) + ADP + phosphate + H(+). It catalyses the reaction methyl beta-D-galactoside(out) + ATP + H2O = methyl beta-D-galactoside(in) + ADP + phosphate + H(+). Functionally, part of the ABC transporter complex MglABC involved in galactose/methyl galactoside import. Responsible for energy coupling to the transport system. The protein is Galactose/methyl galactoside import ATP-binding protein MglA of Shigella flexneri serotype 5b (strain 8401).